A 64-amino-acid polypeptide reads, in one-letter code: Large ribosomal subunit protein bL28 (64 aa).

This sequence belongs to the bacterial ribosomal protein bL28 family.

The chain is Large ribosomal subunit protein bL28 from Trichlorobacter lovleyi (strain ATCC BAA-1151 / DSM 17278 / SZ) (Geobacter lovleyi).